We begin with the raw amino-acid sequence, 316 residues long: Peroxidase 67 (316 aa).

A signal peptide spans Met1–Ala19. Residue Gln20 is modified to Pyrrolidone carboxylic acid. 4 disulfides stabilise this stretch: Cys30–Cys110, Cys63–Cys68, Cys116–Cys312, and Cys196–Cys221. His61 serves as the catalytic Proton acceptor. Positions 62, 65, 67, 69, and 71 each coordinate Ca(2+). Pro159 lines the substrate pocket. Residue His189 coordinates heme b. Thr190 is a binding site for Ca(2+). Asn205 carries an N-linked (GlcNAc...) asparagine glycan. Ca(2+)-binding residues include Asp236, Ser239, and Asp244.

This sequence belongs to the peroxidase family. Classical plant (class III) peroxidase subfamily. Heme b serves as cofactor. It depends on Ca(2+) as a cofactor.

The protein resides in the secreted. It catalyses the reaction 2 a phenolic donor + H2O2 = 2 a phenolic radical donor + 2 H2O. In terms of biological role, removal of H(2)O(2), oxidation of toxic reductants, biosynthesis and degradation of lignin, suberization, auxin catabolism, response to environmental stresses such as wounding, pathogen attack and oxidative stress. These functions might be dependent on each isozyme/isoform in each plant tissue. In Arabidopsis thaliana (Mouse-ear cress), this protein is Peroxidase 67 (PER67).